The sequence spans 351 residues: Holliday junction branch migration complex subunit RuvB (351 aa).

A large ATPase domain (RuvB-L) region spans residues 1–186 (MDEKIETRLI…FGIVQRLEFY (186 aa)). ATP contacts are provided by residues isoleucine 25, arginine 26, glycine 67, lysine 70, threonine 71, threonine 72, 133-135 (EDF), arginine 176, tyrosine 186, and arginine 223. Threonine 71 provides a ligand contact to Mg(2+). A small ATPAse domain (RuvB-S) region spans residues 187 to 257 (RIPDLIHIVK…IAKEALDLLN (71 aa)). Residues 260 to 351 (IRGLDVMDRK…ENFDLLGKVE (92 aa)) form a head domain (RuvB-H) region. DNA is bound by residues arginine 296, arginine 315, and arginine 320.

This sequence belongs to the RuvB family. Homohexamer. Forms an RuvA(8)-RuvB(12)-Holliday junction (HJ) complex. HJ DNA is sandwiched between 2 RuvA tetramers; dsDNA enters through RuvA and exits via RuvB. An RuvB hexamer assembles on each DNA strand where it exits the tetramer. Each RuvB hexamer is contacted by two RuvA subunits (via domain III) on 2 adjacent RuvB subunits; this complex drives branch migration. In the full resolvosome a probable DNA-RuvA(4)-RuvB(12)-RuvC(2) complex forms which resolves the HJ.

It localises to the cytoplasm. It carries out the reaction ATP + H2O = ADP + phosphate + H(+). The RuvA-RuvB-RuvC complex processes Holliday junction (HJ) DNA during genetic recombination and DNA repair, while the RuvA-RuvB complex plays an important role in the rescue of blocked DNA replication forks via replication fork reversal (RFR). RuvA specifically binds to HJ cruciform DNA, conferring on it an open structure. The RuvB hexamer acts as an ATP-dependent pump, pulling dsDNA into and through the RuvAB complex. RuvB forms 2 homohexamers on either side of HJ DNA bound by 1 or 2 RuvA tetramers; 4 subunits per hexamer contact DNA at a time. Coordinated motions by a converter formed by DNA-disengaged RuvB subunits stimulates ATP hydrolysis and nucleotide exchange. Immobilization of the converter enables RuvB to convert the ATP-contained energy into a lever motion, pulling 2 nucleotides of DNA out of the RuvA tetramer per ATP hydrolyzed, thus driving DNA branch migration. The RuvB motors rotate together with the DNA substrate, which together with the progressing nucleotide cycle form the mechanistic basis for DNA recombination by continuous HJ branch migration. Branch migration allows RuvC to scan DNA until it finds its consensus sequence, where it cleaves and resolves cruciform DNA. The chain is Holliday junction branch migration complex subunit RuvB from Coxiella burnetii (strain RSA 331 / Henzerling II).